The chain runs to 84 residues: Control protein C.SmaI (84 aa).

The region spanning 19 to 73 (VRSYRNINNLSQEQLAEISGLHRTYIGSVERKERNVTLSTLIILAKALNTSVPKL) is the HTH cro/C1-type domain. The H-T-H motif DNA-binding region spans 30–49 (QEQLAEISGLHRTYIGSVER).

Its function is as follows. May control expression of its associated restriction-modification system SmaI. The protein is Control protein C.SmaI of Serratia marcescens.